A 460-amino-acid chain; its full sequence is 1-aminocyclopropane-1-carboxylate synthase 11 (460 aa).

Substrate is bound by residues Glu45 and Tyr83. At Lys267 the chain carries N6-(pyridoxal phosphate)lysine.

The protein belongs to the class-I pyridoxal-phosphate-dependent aminotransferase family. As to quaternary structure, homodimer and heterodimer. In vivo, the relevance of heterodimerization with other ACS enzymes is however unsure. Interacts with GRF3. Requires pyridoxal 5'-phosphate as cofactor. May be processed at its C-terminus. As to expression, expressed in roots.

The enzyme catalyses S-adenosyl-L-methionine = 1-aminocyclopropane-1-carboxylate + S-methyl-5'-thioadenosine + H(+). The protein operates within alkene biosynthesis; ethylene biosynthesis via S-adenosyl-L-methionine; ethylene from S-adenosyl-L-methionine: step 1/2. In terms of biological role, 1-aminocyclopropane-1-carboxylate synthase (ACS) enzymes catalyze the conversion of S-adenosyl-L-methionine (SAM) into 1-aminocyclopropane-1-carboxylate (ACC), a direct precursor of ethylene. The chain is 1-aminocyclopropane-1-carboxylate synthase 11 (ACS11) from Arabidopsis thaliana (Mouse-ear cress).